A 316-amino-acid chain; its full sequence is Sorting nexin-20 (316 aa).

The disordered stretch occupies residues 1–57; the sequence is MASHKHPGSPGWTGPICQDMAGTTPKASAPRPDLPRPGPEDHLEAQGSPSSNSSMTT. Phosphoserine is present on serine 3. Residues 47–57 show a composition bias toward polar residues; it reads GSPSSNSSMTT. One can recognise a PX domain in the interval 74 to 191; it reads VKLLFEIASA…DFLTRPELKE (118 aa). A 1,2-diacyl-sn-glycero-3-phospho-(1D-myo-inositol-3-phosphate)-binding residues include arginine 116, serine 118, lysine 143, and arginine 157.

The protein belongs to the sorting nexin family. Interacts with SELPLG. Interaction with SELPLG is controversial.

It is found in the early endosome membrane. Its subcellular location is the cell membrane. It localises to the cytoplasm. The protein localises to the nucleus. Its function is as follows. May play a role in cellular vesicle trafficking. Has been proposed to function as a sorting protein that targets SELPLG into endosomes, but has no effect on SELPLG internalization from the cell surface, or on SELPLG-mediated cell-cell adhesion. In Bos taurus (Bovine), this protein is Sorting nexin-20 (SNX20).